The sequence spans 273 residues: Formamidopyrimidine-DNA glycosylase (273 aa).

Pro2 acts as the Schiff-base intermediate with DNA in catalysis. The Proton donor role is filled by Glu3. Lys60 functions as the Proton donor; for beta-elimination activity in the catalytic mechanism. His94, Arg113, and Lys154 together coordinate DNA. An FPG-type zinc finger spans residues 239 to 273 (EAYGRTGEPCRRCGTPIERIVVAQRSTHICPVCQA). The Proton donor; for delta-elimination activity role is filled by Arg263.

It belongs to the FPG family. In terms of assembly, monomer. Zn(2+) serves as cofactor.

It carries out the reaction Hydrolysis of DNA containing ring-opened 7-methylguanine residues, releasing 2,6-diamino-4-hydroxy-5-(N-methyl)formamidopyrimidine.. It catalyses the reaction 2'-deoxyribonucleotide-(2'-deoxyribose 5'-phosphate)-2'-deoxyribonucleotide-DNA = a 3'-end 2'-deoxyribonucleotide-(2,3-dehydro-2,3-deoxyribose 5'-phosphate)-DNA + a 5'-end 5'-phospho-2'-deoxyribonucleoside-DNA + H(+). Functionally, involved in base excision repair of DNA damaged by oxidation or by mutagenic agents. Acts as a DNA glycosylase that recognizes and removes damaged bases. Has a preference for oxidized purines, such as 7,8-dihydro-8-oxoguanine (8-oxoG). Has AP (apurinic/apyrimidinic) lyase activity and introduces nicks in the DNA strand. Cleaves the DNA backbone by beta-delta elimination to generate a single-strand break at the site of the removed base with both 3'- and 5'-phosphates. The protein is Formamidopyrimidine-DNA glycosylase of Herpetosiphon aurantiacus (strain ATCC 23779 / DSM 785 / 114-95).